A 986-amino-acid chain; its full sequence is Bone morphogenetic protein 1 (986 aa).

Positions 1-22 (MPGVARLPLLLGLLLLPRPGRP) are cleaved as a signal peptide. Residues 23-120 (LDLADYTYDL…RWRGRSRSRR (98 aa)) constitute a propeptide that is removed on maturation. A disordered region spans residues 83–125 (SIKAAVPGNTSTPSCQSTNGQPQRGACGRWRGRSRSRRAATSR). Residues 90–104 (GNTSTPSCQSTNGQP) show a composition bias toward polar residues. Asparagine 91 carries an N-linked (GlcNAc...) asparagine glycan. Over residues 112–122 (WRGRSRSRRAA) the composition is skewed to basic residues. Residues 121–320 (AATSRPERVW…AQARKLYKCP (200 aa)) enclose the Peptidase M12A domain. A glycan (N-linked (GlcNAc...) asparagine) is linked at asparagine 142. Intrachain disulfides connect cysteine 163/cysteine 319, cysteine 183/cysteine 205, cysteine 185/cysteine 186, and cysteine 322/cysteine 348. Histidine 213 provides a ligand contact to Zn(2+). The active site involves glutamate 214. 2 residues coordinate Zn(2+): histidine 217 and histidine 223. CUB domains follow at residues 322–434 (CGET…YEAI) and 435–546 (CGGD…NFFK). N-linked (GlcNAc...) asparagine glycans are attached at residues asparagine 332 and asparagine 363. Cystine bridges form between cysteine 375/cysteine 397, cysteine 435/cysteine 461, cysteine 488/cysteine 510, cysteine 551/cysteine 563, cysteine 559/cysteine 572, cysteine 574/cysteine 587, cysteine 591/cysteine 617, cysteine 644/cysteine 666, cysteine 707/cysteine 718, cysteine 714/cysteine 727, cysteine 729/cysteine 742, cysteine 747/cysteine 773, cysteine 800/cysteine 822, cysteine 860/cysteine 890, and cysteine 917/cysteine 939. The EGF-like 1; calcium-binding domain maps to 547 to 588 (EVDECSRPNRGGCEQRCLNTLGSYKCSCDPGYELAPDKRRCE). Residues 591-703 (CGGFLTKLNG…KGFKAHFFSD (113 aa)) form the CUB 3 domain. Residue asparagine 599 is glycosylated (N-linked (GlcNAc...) asparagine). Residues 704 to 743 (KDECSKDNGGCQQDCVNTFGSYECQCRSGFVLHDNKHDCK) form the EGF-like 2; calcium-binding domain. 2 CUB domains span residues 747–859 (CDHK…HATE) and 860–976 (CGGQ…YTST). Residues arginine 934 and arginine 937 each carry the omega-N-methylarginine modification.

Interacts with POSTN, the interaction promotes deposition on the extracellular matrix. Zn(2+) serves as cofactor. Post-translationally, proteolytically activated in the trans-Golgi network by furin-like/paired basic proprotein convertases, cleavage is not required for secretion. In terms of tissue distribution, ubiquitous.

Its subcellular location is the golgi apparatus. It is found in the trans-Golgi network. The protein resides in the secreted. It localises to the extracellular space. The protein localises to the extracellular matrix. It catalyses the reaction Cleavage of the C-terminal propeptide at Ala-|-Asp in type I and II procollagens and at Arg-|-Asp in type III.. Activity is increased by the procollagen C-endopeptidase enhancer protein. Metalloprotease that plays key roles in regulating the formation of the extracellular matrix (ECM) via processing of various precursor proteins into mature functional enzymes or structural proteins. Thereby participates in several developmental and physiological processes such as cartilage and bone formation, muscle growth and homeostasis, wound healing and tissue repair. Roles in ECM formation include cleavage of the C-terminal propeptides from procollagens such as procollagen I, II and III or the proteolytic activation of the enzyme lysyl oxidase LOX, necessary to formation of covalent cross-links in collagen and elastic fibers. Additional substrates include matricellular thrombospondin-1/THBS1 whose cleavage leads to cell adhesion disruption and TGF-beta activation. In terms of biological role, plays an important role in bone repair by acting as a coactivator of BMP7. This is Bone morphogenetic protein 1 (BMP1) from Homo sapiens (Human).